Here is a 357-residue protein sequence, read N- to C-terminus: Transactivator protein DR7 (357 aa).

The tract at residues 107-187 (LVGKDGAVYV…LLTVGGLCQT (81 aa)) is interaction with host p53.

It belongs to the herpesviridae US22 family. In terms of assembly, interacts with host p53 and inhibits p53-activated transcription.

Involved in transactivation. Displays transforming activity. The protein is Transactivator protein DR7 (DR7L) of Homo sapiens (Human).